A 494-amino-acid polypeptide reads, in one-letter code: GTPase Der (494 aa).

2 consecutive EngA-type G domains span residues 2–164 (KKIA…PEED) and 235–407 (IKIS…KNYS). GTP contacts are provided by residues 8 to 15 (GRPNVGKS), 55 to 59 (DTGGL), 116 to 119 (NKID), 241 to 248 (GRTNVGKS), 288 to 292 (DTAGL), and 352 to 355 (NKWD). The 85-residue stretch at 408–492 (QHIKTSELNV…PVLFKAKKRG (85 aa)) folds into the KH-like domain.

Belongs to the TRAFAC class TrmE-Era-EngA-EngB-Septin-like GTPase superfamily. EngA (Der) GTPase family. As to quaternary structure, associates with the 50S ribosomal subunit.

In terms of biological role, GTPase that plays an essential role in the late steps of ribosome biogenesis. The sequence is that of GTPase Der from Sulfurimonas denitrificans (strain ATCC 33889 / DSM 1251) (Thiomicrospira denitrificans (strain ATCC 33889 / DSM 1251)).